The primary structure comprises 866 residues: Retinoblastoma-related protein 2 (866 aa).

The tract at residues 274–475 (TPITSAMTTA…EKGSSLYNSL (202 aa)) is domain A. The tract at residues 274–721 (TPITSAMTTA…NEVFVPAAKP (448 aa)) is pocket. Residues 476–593 (IVARPSVASE…PVGGNEKCAD (118 aa)) are spacer. Residues 513–551 (LPATPSKKRAAGRDDNADPRSPKRPCNESRSPVVEHNLQ) are disordered. Over residues 523-539 (AGRDDNADPRSPKRPCN) the composition is skewed to basic and acidic residues. Residues 594–721 (VTIQIFFSKI…NEVFVPAAKP (128 aa)) form a domain B region. Disordered stretches follow at residues 731-754 (TRPE…PFPN) and 839-866 (SLGQ…KPDT). The span at 841-850 (GQPNGGSTSL) shows a compositional bias: polar residues.

The protein belongs to the retinoblastoma protein (RB) family. Ubiquitous.

It localises to the nucleus. Its function is as follows. Regulator of biological processes that recruits a histone deacetylase to control gene transcription. May play a role in the entry into mitosis, negatively regulating the cell proliferation. Formation of stable complexes with geminiviridae replication-associated proteins may create a cellular environment which favors viral DNA replication. This is Retinoblastoma-related protein 2 (RBR2) from Zea mays (Maize).